Here is a 339-residue protein sequence, read N- to C-terminus: Uroporphyrinogen decarboxylase (339 aa).

Substrate-binding positions include 21-25, Phe40, Asp71, Tyr147, Ser202, and His315; that span reads RQAGR.

It belongs to the uroporphyrinogen decarboxylase family. Homodimer.

Its subcellular location is the cytoplasm. It carries out the reaction uroporphyrinogen III + 4 H(+) = coproporphyrinogen III + 4 CO2. It functions in the pathway porphyrin-containing compound metabolism; protoporphyrin-IX biosynthesis; coproporphyrinogen-III from 5-aminolevulinate: step 4/4. In terms of biological role, catalyzes the decarboxylation of four acetate groups of uroporphyrinogen-III to yield coproporphyrinogen-III. The chain is Uroporphyrinogen decarboxylase from Helicobacter pylori (strain J99 / ATCC 700824) (Campylobacter pylori J99).